The sequence spans 658 residues: MNLNLIFKEQTLKFNKEEQETYLFLQQHNSDWANIFKEMILQGRDKVTQRLVTSMHRENLVKARTQSKKILSRDLIMLDISTTHILEIQFPQAKQTLYAPITGEHAFDRIDVEGPFYIKDDITNTITRVHHPNEILECILIEAPDLKNAASDQFQQDLINSATNMTFAISYQALSMQHDSAPLFNIIENSEDSYLRSEQAVIEGHPLHPGAKLRKGLNALQTFLYSSEFNQPIKLKIVLIHSKLSRTMSLSKDYDTTVHQLFPDLIKQLENEFTPKFNFNDYHIMIVHPWQLDDVLHSDYQAEVDKELIIEAKHTLDYYAGLSFRTLVPKYPAMSPHIKLSTNVHITGEIRTLSEQTTHNGPLMTRILNDILEKDVIFKSYASTIIDEVAGIHFYNEQDEADYQTERSEQLGTLFRKNIYQMIPQEVTPLIPSSLVATYPFNNESPIVTLIKRYQSAASLSDFESSAKSWVETYSKALLGLVIPLVTKYGIALEAHLQNAIATFRKDGLLDTMYIRDFEGLRIDKAQLNEMVYSTSHFHEKSRILTDSKTSVFNKAFYSTVQNHLGELILTISKASNDSNLERHMWYIVRDVLDNIFDQLVLSTHKSNQVNENRINEIKDTMFAPFIDYKCVTTMRLEDEAHHYTYIKVNNPLYRENN.

This sequence belongs to the IucA/IucC family.

The enzyme catalyses D-ornithine + citrate + ATP = N(5)-[(S)-citryl]-D-ornithine + AMP + diphosphate + H(+). The protein operates within siderophore biosynthesis. Functionally, involved in the biosynthesis of the siderophore staphyloferrin A. Catalyzes the ATP-dependent condensation of D-ornithine and citrate to form a citryl-D-ornithine intermediate. In Staphylococcus aureus (strain NCTC 8325 / PS 47), this protein is D-ornithine--citrate ligase.